The chain runs to 110 residues: uncharacterized protein (110 aa).

May play a regulatory role in sulfomenaquinone (SMK) biosynthesis. This is an uncharacterized protein from Mycobacterium bovis (strain ATCC BAA-935 / AF2122/97).